The chain runs to 481 residues: Protein nucleotidyltransferase YdiU (481 aa).

8 residues coordinate ATP: Gly85, Gly87, Arg88, Lys108, Asp120, Gly121, Arg172, and Arg179. The active-site Proton acceptor is Asp248. Mg(2+)-binding residues include Asn249 and Asp258. Residue Asp258 participates in ATP binding.

The protein belongs to the SELO family. It depends on Mg(2+) as a cofactor. Mn(2+) is required as a cofactor.

The catalysed reaction is L-seryl-[protein] + ATP = 3-O-(5'-adenylyl)-L-seryl-[protein] + diphosphate. It carries out the reaction L-threonyl-[protein] + ATP = 3-O-(5'-adenylyl)-L-threonyl-[protein] + diphosphate. The enzyme catalyses L-tyrosyl-[protein] + ATP = O-(5'-adenylyl)-L-tyrosyl-[protein] + diphosphate. It catalyses the reaction L-histidyl-[protein] + UTP = N(tele)-(5'-uridylyl)-L-histidyl-[protein] + diphosphate. The catalysed reaction is L-seryl-[protein] + UTP = O-(5'-uridylyl)-L-seryl-[protein] + diphosphate. It carries out the reaction L-tyrosyl-[protein] + UTP = O-(5'-uridylyl)-L-tyrosyl-[protein] + diphosphate. Nucleotidyltransferase involved in the post-translational modification of proteins. It can catalyze the addition of adenosine monophosphate (AMP) or uridine monophosphate (UMP) to a protein, resulting in modifications known as AMPylation and UMPylation. The sequence is that of Protein nucleotidyltransferase YdiU from Cereibacter sphaeroides (strain ATCC 17029 / ATH 2.4.9) (Rhodobacter sphaeroides).